Here is a 30-residue protein sequence, read N- to C-terminus: ERRCPRILKQCKRDSDCPGECICMAHGFCG.

3 disulfide bridges follow: C4–C21, C11–C23, and C17–C29.

The protein belongs to the protease inhibitor I7 (squash-type serine protease inhibitor) family.

Its subcellular location is the secreted. Functionally, inhibits trypsin. The polypeptide is Trypsin inhibitor 1 (Momordica charantia (Bitter gourd)).